The following is a 189-amino-acid chain: Keratin-associated protein 5-2 (189 aa).

A run of 8 repeats spans residues 21 to 24 (CCKP), 27 to 30 (CCKP), 33 to 36 (CCVP), 134 to 137 (CCKP), 144 to 147 (CCKP), 159 to 162 (CCKP), 169 to 172 (CCKP), and 179 to 182 (CCAP). An 8 X 4 AA repeats of C-C-X-P region spans residues 27–182 (CCKPVCCCVP…CCCQSSCCAP (156 aa)).

The protein belongs to the KRTAP type 5 family. As to quaternary structure, interacts with hair keratins.

In the hair cortex, hair keratin intermediate filaments are embedded in an interfilamentous matrix, consisting of hair keratin-associated protein (KRTAP), which are essential for the formation of a rigid and resistant hair shaft through their extensive disulfide bond cross-linking with abundant cysteine residues of hair keratins. The matrix proteins include the high-sulfur and high-glycine-tyrosine keratins. This Mus musculus (Mouse) protein is Keratin-associated protein 5-2.